The sequence spans 469 residues: SWI/SNF complex subunit SWI3B (469 aa).

Residues 1-42 are disordered; it reads MAMKAPDPGGSGEILPSTPSLSETTSGGAAAASKSAQLPSSS. Residues 15 to 42 are compositionally biased toward low complexity; that stretch reads LPSTPSLSETTSGGAAAASKSAQLPSSS. An SWIRM domain is found at 48-145; the sequence is IHVPSYSSWF…YNSSASAKPL (98 aa). The SANT domain maps to 223 to 274; the sequence is ESKPEWSDKEILLLLEAVMHYGDDWKKVASHVIGRTEKDCVSQFVKLPFGEQ. Composition is skewed to basic and acidic residues over residues 293 to 306 and 360 to 369; these read DSDIPESEGIDKDG and DKNASRDPNR. 2 disordered regions span residues 293–314 and 360–387; these read DSDIPESEGIDKDGSSPNKRIK and DKNASRDPNRQDANAASSGETTRNESER. Polar residues predominate over residues 370–380; that stretch reads QDANAASSGET. Positions 423–447 form a coiled coil; that stretch reads VHFEKLDLEMERSRKQLEEVRNLLF.

As to quaternary structure, homodimers and heterodimers. Interacts with SWI3A, SWI3C, SWI3D, BSH, BRM and FCA (via C-terminus), and (via N-terminus) with HAB1. Interacts with MORC6 and SUVH9. Expressed in roots, stems, leaves, flowers and siliques.

It is found in the nucleus. In terms of biological role, component of a multiprotein complex equivalent of the SWI/SNF complex, an ATP-dependent chromatin-remodeling complex, which is required for the positive and negative regulation of gene expression of a large number of genes. It changes chromatin structure by altering DNA-histone contacts within a nucleosome, leading eventually to a change in nucleosome position, thus facilitating or repressing binding of gene-specific transcription factors. May play an essential role in the transition from the vegetative to the reproductive phase of development. May be a positive regulator of ABA signaling. In Arabidopsis thaliana (Mouse-ear cress), this protein is SWI/SNF complex subunit SWI3B (SWI3B).